The sequence spans 103 residues: Large ribosomal subunit protein bL21 (103 aa).

Belongs to the bacterial ribosomal protein bL21 family. Part of the 50S ribosomal subunit. Contacts protein L20.

This protein binds to 23S rRNA in the presence of protein L20. The chain is Large ribosomal subunit protein bL21 from Psychrobacter sp. (strain PRwf-1).